The primary structure comprises 86 residues: Large ribosomal subunit protein eL43 (86 aa).

A C4-type zinc finger spans residues 38 to 59 (CPVCGRKAVRRISTGIWQCQKC).

The protein belongs to the eukaryotic ribosomal protein eL43 family. The cofactor is Zn(2+).

The protein is Large ribosomal subunit protein eL43 of Thermococcus gammatolerans (strain DSM 15229 / JCM 11827 / EJ3).